Consider the following 296-residue polypeptide: Ribosomal protein L11 methyltransferase (296 aa).

Residues Thr139, Gly163, Asp185, and Asn232 each contribute to the S-adenosyl-L-methionine site.

This sequence belongs to the methyltransferase superfamily. PrmA family.

The protein localises to the cytoplasm. It carries out the reaction L-lysyl-[protein] + 3 S-adenosyl-L-methionine = N(6),N(6),N(6)-trimethyl-L-lysyl-[protein] + 3 S-adenosyl-L-homocysteine + 3 H(+). In terms of biological role, methylates ribosomal protein L11. In Picosynechococcus sp. (strain ATCC 27264 / PCC 7002 / PR-6) (Agmenellum quadruplicatum), this protein is Ribosomal protein L11 methyltransferase.